A 566-amino-acid polypeptide reads, in one-letter code: E3 ubiquitin-protein ligase RNF220 (566 aa).

Lysine 277 participates in a covalent cross-link: Glycyl lysine isopeptide (Lys-Gly) (interchain with G-Cter in SUMO2). Positions 277-297 (KREGESPTASPHSSATDDLHH) are disordered. At serine 390 the chain carries Phosphoserine. Residues 485 to 513 (EDSAVTTFEALKARVRELERQLSRGDRYK) are a coiled coil. A required for targeting to the cytoplasm region spans residues 514 to 522 (CLICMDSYS). The RING-type zinc finger occupies 514-553 (CLICMDSYSMPLTSIQCWHVHCEECWLRTLGAKKLCPQCY).

In terms of assembly, interacts with SIN3B. Interacts with CTNNB1 (via Armadillo repeats 2-8). Interacts with USP7 (via MATH domain). Post-translationally, auto-ubiquitinated; leads to proteasomal degradation.

Its subcellular location is the cytoplasm. The catalysed reaction is S-ubiquitinyl-[E2 ubiquitin-conjugating enzyme]-L-cysteine + [acceptor protein]-L-lysine = [E2 ubiquitin-conjugating enzyme]-L-cysteine + N(6)-ubiquitinyl-[acceptor protein]-L-lysine.. It participates in protein modification; protein ubiquitination. In terms of biological role, E3 ubiquitin-protein ligase that promotes the ubiquitination and proteasomal degradation of SIN3B. Independently of its E3 ligase activity, acts as a CTNNB1 stabilizer through USP7-mediated deubiquitination of CTNNB1 promoting Wnt signaling. The sequence is that of E3 ubiquitin-protein ligase RNF220 (RNF220) from Bos taurus (Bovine).